Reading from the N-terminus, the 240-residue chain is Epoxyqueuosine reductase QueH (240 aa).

[4Fe-4S] cluster is bound by residues C43, C44, C129, and C132. C211 and C213 form a disulfide bridge.

The protein belongs to the QueH family.

It catalyses the reaction epoxyqueuosine(34) in tRNA + AH2 = queuosine(34) in tRNA + A + H2O. It participates in tRNA modification; tRNA-queuosine biosynthesis. Catalyzes the conversion of epoxyqueuosine (oQ) to queuosine (Q), which is a hypermodified base found in the wobble positions of tRNA(Asp), tRNA(Asn), tRNA(His) and tRNA(Tyr). The polypeptide is Epoxyqueuosine reductase QueH (Staphylococcus aureus (strain Mu50 / ATCC 700699)).